We begin with the raw amino-acid sequence, 244 residues long: Lymphotoxin-beta (244 aa).

At 1 to 18 (MGALGLEGRGGRLQGRGS) the chain is on the cytoplasmic side. A helical; Signal-anchor for type II membrane protein membrane pass occupies residues 19 to 48 (LLLAVAGATSLVTLLLAVPITVLAVLALVP). Topologically, residues 49–244 (QDQGGLVTET…KTFFGAVMVG (196 aa)) are extracellular. The THD domain maps to 88 to 243 (PAAHLIGAPL…GKTFFGAVMV (156 aa)). The N-linked (GlcNAc...) asparagine glycan is linked to Asn-222.

This sequence belongs to the tumor necrosis factor family. Heterotrimer of either two LTB and one LTA subunits or (less prevalent) one LTB and two LTA subunits. Spleen and thymus.

It is found in the membrane. Cytokine that binds to LTBR/TNFRSF3. May play a specific role in immune response regulation. Provides the membrane anchor for the attachment of the heterotrimeric complex to the cell surface. Isoform 2 is probably non-functional. The sequence is that of Lymphotoxin-beta (LTB) from Homo sapiens (Human).